The sequence spans 266 residues: Putative carbamate hydrolase RutD (266 aa).

The region spanning 14 to 115 (PVVVLISGLG…TVLVSVNGWL (102 aa)) is the AB hydrolase-1 domain.

This sequence belongs to the AB hydrolase superfamily. Hydrolase RutD family.

It catalyses the reaction carbamate + 2 H(+) = NH4(+) + CO2. Its function is as follows. Involved in pyrimidine catabolism. May facilitate the hydrolysis of carbamate, a reaction that can also occur spontaneously. The sequence is that of Putative carbamate hydrolase RutD from Escherichia coli O9:H4 (strain HS).